Reading from the N-terminus, the 367-residue chain is D-alanine--D-alanine ligase (367 aa).

Positions 145–351 (KRLLRDAGLP…QPALMDELVA (207 aa)) constitute an ATP-grasp domain. 174-229 (RAVGSSELFVKPANLGSSVGISKTRDAAEFEAACQLALRFDRKILIERCIAPVREI) is an ATP binding site. Asp306, Glu318, and Asn320 together coordinate Mg(2+).

This sequence belongs to the D-alanine--D-alanine ligase family. The cofactor is Mg(2+). Mn(2+) is required as a cofactor.

It is found in the cytoplasm. It catalyses the reaction 2 D-alanine + ATP = D-alanyl-D-alanine + ADP + phosphate + H(+). It functions in the pathway cell wall biogenesis; peptidoglycan biosynthesis. Functionally, cell wall formation. The chain is D-alanine--D-alanine ligase from Bradyrhizobium sp. (strain ORS 278).